The sequence spans 392 residues: HCLS1-binding protein 3 (392 aa).

At methionine 1 the chain carries N-acetylmethionine. 3 positions are modified to phosphoserine: serine 3, serine 139, and serine 194. The PX domain occupies 19–142 (GLDLTVPQHQ…EFLGTRSPGA (124 aa)). Disordered regions lie at residues 138 to 162 (RSPGAAGLTSRDSSVLDGTDSQTGN), 174 to 265 (DQVA…PLKL), and 319 to 364 (GAEP…KPQE). The span at 190-201 (DAEESLEEEEAL) shows a compositional bias: acidic residues. Over residues 208–220 (RSKKPKKHPKVAV) the composition is skewed to basic residues. Serine 249 carries the post-translational modification Phosphoserine. A compositionally biased stretch (pro residues) spans 325-335 (KPQLKPKPPVA). Position 337 is an N6-acetyllysine (lysine 337).

As to quaternary structure, binds HCLS1. Interacts with the SH3 domain of HCLS1 in vitro.

Its function is as follows. May be a modulator of IL-2 signaling. The polypeptide is HCLS1-binding protein 3 (HS1BP3) (Homo sapiens (Human)).